A 273-amino-acid polypeptide reads, in one-letter code: 2,3,4,5-tetrahydropyridine-2,6-dicarboxylate N-succinyltransferase (273 aa).

Positions 104 and 141 each coordinate substrate.

Belongs to the transferase hexapeptide repeat family. As to quaternary structure, homotrimer.

The protein resides in the cytoplasm. It carries out the reaction (S)-2,3,4,5-tetrahydrodipicolinate + succinyl-CoA + H2O = (S)-2-succinylamino-6-oxoheptanedioate + CoA. It functions in the pathway amino-acid biosynthesis; L-lysine biosynthesis via DAP pathway; LL-2,6-diaminopimelate from (S)-tetrahydrodipicolinate (succinylase route): step 1/3. This chain is 2,3,4,5-tetrahydropyridine-2,6-dicarboxylate N-succinyltransferase, found in Azoarcus sp. (strain BH72).